A 231-amino-acid chain; its full sequence is Achaete-scute homolog 1 (231 aa).

Disordered stretches follow at residues 1–24 (MESS…FLPP) and 39–92 (AAAA…PELM). The segment covering 39–51 (AAAAAQSAQQQQP) has biased composition (low complexity). Basic residues predominate over residues 76–85 (SAAKQVKRQR). In terms of domain architecture, bHLH spans 113 to 165 (AAVARRNERERNRVKLVNLGFATLREHVPNGAANKKMSKVETLRSAVEYIRAL). An N6-acetyllysine modification is found at K151.

In terms of assembly, efficient DNA binding requires dimerization with another bHLH protein. Forms a heterodimer with TCF3. As to expression, developing CNS and PNS at embryonic and postnatal stages. Expressed in the epithelium of glandular stomach.

It is found in the nucleus. Its function is as follows. Transcription factor that plays a key role in neuronal differentiation: acts as a pioneer transcription factor, accessing closed chromatin to allow other factors to bind and activate neural pathways. Directly binds the E box motif (5'-CANNTG-3') on promoters and promotes transcription of neuronal genes. The combination of three transcription factors, ASCL1, POU3F2/BRN2 and MYT1L, is sufficient to reprogram fibroblasts and other somatic cells into induced neuronal (iN) cells in vitro. Plays a role at early stages of development of specific neural lineages in most regions of the CNS, and of several lineages in the PNS. Essential for the generation of olfactory and autonomic neurons. Acts synergistically with FOXN4 to specify the identity of V2b neurons rather than V2a from bipotential p2 progenitors during spinal cord neurogenesis, probably through DLL4-NOTCH signaling activation. Involved in the regulation of neuroendocrine cell development in the glandular stomach. This Mus musculus (Mouse) protein is Achaete-scute homolog 1.